The following is a 159-amino-acid chain: Cell division protein SepF (159 aa).

The interval 23-69 (DYIEEDEEQKPASKSAFDSDHTVTPLASTTAPAASSTTKPFPGGRVN) is disordered. Over residues 44–64 (TVTPLASTTAPAASSTTKPFP) the composition is skewed to low complexity.

Belongs to the SepF family. Homodimer. Interacts with FtsZ.

Its subcellular location is the cytoplasm. Cell division protein that is part of the divisome complex and is recruited early to the Z-ring. Probably stimulates Z-ring formation, perhaps through the cross-linking of FtsZ protofilaments. Its function overlaps with FtsA. In Bifidobacterium longum (strain DJO10A), this protein is Cell division protein SepF.